The sequence spans 202 residues: Acireductone dioxygenase (202 aa).

4 residues coordinate Fe(2+): His-110, His-112, Glu-116, and His-154. Ni(2+) is bound by residues His-110, His-112, Glu-116, and His-154.

It belongs to the acireductone dioxygenase (ARD) family. In terms of assembly, monomer. Fe(2+) serves as cofactor. Requires Ni(2+) as cofactor.

The enzyme catalyses 1,2-dihydroxy-5-(methylsulfanyl)pent-1-en-3-one + O2 = 3-(methylsulfanyl)propanoate + CO + formate + 2 H(+). It catalyses the reaction 1,2-dihydroxy-5-(methylsulfanyl)pent-1-en-3-one + O2 = 4-methylsulfanyl-2-oxobutanoate + formate + 2 H(+). The protein operates within amino-acid biosynthesis; L-methionine biosynthesis via salvage pathway; L-methionine from S-methyl-5-thio-alpha-D-ribose 1-phosphate: step 5/6. In terms of biological role, catalyzes 2 different reactions between oxygen and the acireductone 1,2-dihydroxy-3-keto-5-methylthiopentene (DHK-MTPene) depending upon the metal bound in the active site. Fe-containing acireductone dioxygenase (Fe-ARD) produces formate and 2-keto-4-methylthiobutyrate (KMTB), the alpha-ketoacid precursor of methionine in the methionine recycle pathway. Ni-containing acireductone dioxygenase (Ni-ARD) produces methylthiopropionate, carbon monoxide and formate, and does not lie on the methionine recycle pathway. The chain is Acireductone dioxygenase from Synechococcus sp. (strain CC9311).